The sequence spans 254 residues: Transmembrane protein 269 (254 aa).

5 helical membrane passes run 44 to 64, 69 to 89, 113 to 135, 171 to 191, and 210 to 230; these read IINA…FCSF, YCAS…GTMT, LASA…IYVL, LTKG…LFMI, and IVYI…TAFY.

It is found in the membrane. The polypeptide is Transmembrane protein 269 (Mus musculus (Mouse)).